The following is a 442-amino-acid chain: NAD kinase 2, mitochondrial (442 aa).

The transit peptide at 1–62 (MTCYRGFLLG…RELAGCGSRA (62 aa)) directs the protein to the mitochondrion. Positions 24–36 (RGPGAGGPAARPR) are enriched in low complexity. The disordered stretch occupies residues 24–60 (RGPGAGGPAARPRLGGDGGGRRHLGQGQPRELAGCGS). K76 is modified (N6-acetyllysine; alternate). K76 is subject to N6-succinyllysine; alternate. S188 carries the phosphoserine modification. An N6-succinyllysine modification is found at K302. K317 is subject to N6-acetyllysine; alternate. Position 317 is an N6-succinyllysine; alternate (K317). S367 is modified (phosphoserine). N6-acetyllysine is present on K397.

It belongs to the NAD kinase family. Homodimer. As to expression, widely expressed.

The protein localises to the mitochondrion. The enzyme catalyses NAD(+) + ATP = ADP + NADP(+) + H(+). Inhibited by NADH, NADPH and NADP(+). Its function is as follows. Mitochondrial NAD(+) kinase that phosphorylates NAD(+) to yield NADP(+). Can use both ATP or inorganic polyphosphate as the phosphoryl donor. Also has weak NADH kinase activity in vitro; however NADH kinase activity is much weaker than the NAD(+) kinase activity and may not be relevant in vivo. The sequence is that of NAD kinase 2, mitochondrial (NADK2) from Homo sapiens (Human).